Here is a 559-residue protein sequence, read N- to C-terminus: Arginine--tRNA ligase (559 aa).

The short motif at 116–126 (ANPNGPLHVGH) is the 'HIGH' region element.

It belongs to the class-I aminoacyl-tRNA synthetase family.

It is found in the cytoplasm. The catalysed reaction is tRNA(Arg) + L-arginine + ATP = L-arginyl-tRNA(Arg) + AMP + diphosphate. This chain is Arginine--tRNA ligase, found in Methanosphaerula palustris (strain ATCC BAA-1556 / DSM 19958 / E1-9c).